The primary structure comprises 828 residues: Chitin synthase 7 (828 aa).

6 consecutive transmembrane segments (helical) span residues 17–37 (VIVG…VAAF), 57–77 (AVVV…IMVV), 95–115 (VGLQ…PWLF), 444–464 (FMQN…LAIL), 473–493 (LPVG…IYFG), and 501–521 (IWLY…YMVY). An N-linked (GlcNAc...) asparagine glycan is attached at N615. 2 stretches are compositionally biased toward low complexity: residues 740 to 752 (SLVS…SNSN) and 813 to 822 (SNNDPNNSNS). Disordered regions lie at residues 740-780 (SLVS…LGRA) and 793-828 (LEIG…HQQR). N-linked (GlcNAc...) asparagine glycosylation occurs at N818.

This sequence belongs to the chitin synthase family. Class VII subfamily.

Its subcellular location is the membrane. It catalyses the reaction [(1-&gt;4)-N-acetyl-beta-D-glucosaminyl](n) + UDP-N-acetyl-alpha-D-glucosamine = [(1-&gt;4)-N-acetyl-beta-D-glucosaminyl](n+1) + UDP + H(+). Functionally, polymerizes chitin, a structural polymer of the cell wall and septum, by transferring the sugar moiety of UDP-GlcNAc to the non-reducing end of the growing chitin polymer. Required for normal appressorial chitin content and for the normal formation and function of these infection structures. In Pyricularia oryzae (strain 70-15 / ATCC MYA-4617 / FGSC 8958) (Rice blast fungus), this protein is Chitin synthase 7.